The primary structure comprises 543 residues: Probable protein kinase UbiB (543 aa).

One can recognise a Protein kinase domain in the interval 123 to 501 (DFDSQALASA…GSRQGRARYL (379 aa)). Residues 129 to 137 (LASASIAQV) and Lys152 contribute to the ATP site. The Proton acceptor role is filled by Asp287. Residues 517-537 (MVNIALWPIGLYVAGGVIWLA) traverse the membrane as a helical segment.

This sequence belongs to the ABC1 family. UbiB subfamily.

It localises to the cell inner membrane. It functions in the pathway cofactor biosynthesis; ubiquinone biosynthesis [regulation]. In terms of biological role, is probably a protein kinase regulator of UbiI activity which is involved in aerobic coenzyme Q (ubiquinone) biosynthesis. The polypeptide is Probable protein kinase UbiB (Edwardsiella ictaluri (strain 93-146)).